A 446-amino-acid polypeptide reads, in one-letter code: Citrate/sodium symporter (446 aa).

The Cytoplasmic segment spans residues 1 to 27; sequence MTNMSQPPATEKKGVSDLLGFKIFGMP. Residues 28–44 traverse the membrane as a helical segment; that stretch reads LPLYAFALITLLLSHFY. At 45-50 the chain is on the periplasmic side; the sequence is NALPTD. The helical transmembrane segment at 51–71 threads the bilayer; sequence IVGGFAIMFIIGAIFGEIGKR. The Cytoplasmic portion of the chain corresponds to 72-80; it reads LPIFNKYIG. Residues 81 to 95 traverse the membrane as a helical segment; sequence GAPVMIFLVAAYFVY. Residues 96-115 lie on the Periplasmic side of the membrane; the sequence is AGIFTQKEIDAISNVMDKSN. A helical membrane pass occupies residues 116-130; it reads FLNLFIAVLITGAIL. Residues 131-136 are Cytoplasmic-facing; the sequence is SVNRRL. Residues 137–166 traverse the membrane as a helical segment; sequence LLKSLLGYIPTILMGIVGASIFGIAIGLVF. At 167–181 the chain is on the periplasmic side; the sequence is GIPVDRIMMLYVLPI. Positions 181 and 183 each coordinate Na(+). The helical intramembrane region spans 182–189; it reads MGGGNGAG. Citrate-binding residues include Asn-186 and Gly-187. Residues 190-212 lie on the Periplasmic side of the membrane; it reads AVPLSEIYHSVTGRSREEYYSTA. Residues 213–233 traverse the membrane as a helical segment; the sequence is IAILTIANIFAIVFAAVLDII. Topologically, residues 234-264 are cytoplasmic; the sequence is GKKHTWLSGEGELVRKASFKVEEDEKTGQIT. Residues 265–287 form a helical membrane-spanning segment; it reads HRETAVGLVLSTTCFLLAYVVAK. The Periplasmic segment spans residues 288-299; it reads KILPSIGGVAIH. Residues 300–315 form a helical membrane-spanning segment; it reads YFAWMVLIVAALNASG. Over 316–327 the chain is Cytoplasmic; it reads LCSPEIKAGAKR. The chain crosses the membrane as a helical span at residues 328-351; it reads LSDFFSKQLLWVLMVGVGVCYTDL. Over 352–359 the chain is Periplasmic; sequence QEIINAIT. Residues 360–381 form a helical membrane-spanning segment; sequence FANVVIAAIIVIGAVLGAAIGG. At 382–398 the chain is on the cytoplasmic side; the sequence is WLMGFFPIESAITAGLC. The Na(+) site is built by Met-399 and Asn-401. An intramembrane region (helical) is located at residues 399-406; it reads MANRGGSG. Residues Arg-402, Gly-404, and Ser-405 each contribute to the citrate site. At 407–416 the chain is on the cytoplasmic side; sequence DLEVLSACNR. Residues 417–438 form a helical membrane-spanning segment; the sequence is MNLISYAQISSRLGGGIVLVIA. Arg-428 serves as a coordination point for citrate. Topologically, residues 439 to 446 are periplasmic; sequence SIVFGMMI.

This sequence belongs to the 2-hydroxycarboxylate transporter (2-HCT) (TC 2.A.24) family. As to quaternary structure, homodimer.

It is found in the cell inner membrane. The enzyme catalyses citrate(out) + 2 Na(+)(out) = citrate(in) + 2 Na(+)(in). Its activity is regulated as follows. In the absence of Na(+), transport is inhibited by the thiol reagents N-ethylmaleimide (NEM) and the methanethiosulfonate (MTS) derivatives MTSEA, MTSET and MTSES. However, inactivation by NEM, MTSES and MTSET is prevented by the presence of Na(+). In the absence of Na(+), the substrate citrate has no effect on the inactivation by permeable or impermeable thiol reagents. In contrast, when subsaturating concentrations of Na(+) are present, citrate significantly reduces inactivation, suggesting ordered binding of the substrate and co-ion; citrate is bound after Na(+). The membrane impermeable bulky maleimide AmdiS does not inactivate the transporter in right-side-out membrane vesicles. The apparent affinity for Na(+) decreases with increasing proton concentration. Protons cannot replace Na(+) in the translocation step but the decrease in apparent affinity for Na(+) towards lower pH suggests that protons can compete with Na(+) for the cation-binding sites. Secondary active transporter that catalyzes the uptake of citrate across the membrane with the concomitant uptake of sodium. There are conflicting data regarding exact substrate stoichiometry: the sodium/citrate stoichiometry was predicted to be 1, but the latest studies suggest that CitS transports citrate in symport with 2 sodium ions. Transports citrate as a divalent citrate anion, H-citrate(2-). Shows narrow substrate specificity and is very specific, transporting only citrate and to a low extent citromalate. Symport of Na(+) is absolutely required in the range pH 5-7 because no uptake can be detected in the absence of Na(+). Lithium can replace Na(+) in the symport reaction but it takes about a 200-fold higher concentration of Li(+) over Na(+) to achieve the same rate of uptake. The protein is Citrate/sodium symporter of Klebsiella pneumoniae.